The chain runs to 340 residues: Anthranilate phosphoribosyltransferase (340 aa).

5-phospho-alpha-D-ribose 1-diphosphate-binding positions include glycine 84, 87–88, threonine 92, 94–97, 112–120, and serine 124; these read GD, NIST, and KHGSRSVSS. Glycine 84 serves as a coordination point for anthranilate. Serine 96 is a Mg(2+) binding site. Position 170 (arginine 170) interacts with anthranilate. Mg(2+) contacts are provided by aspartate 228 and glutamate 229.

Belongs to the anthranilate phosphoribosyltransferase family. As to quaternary structure, homodimer. The cofactor is Mg(2+).

The enzyme catalyses N-(5-phospho-beta-D-ribosyl)anthranilate + diphosphate = 5-phospho-alpha-D-ribose 1-diphosphate + anthranilate. Its pathway is amino-acid biosynthesis; L-tryptophan biosynthesis; L-tryptophan from chorismate: step 2/5. Catalyzes the transfer of the phosphoribosyl group of 5-phosphorylribose-1-pyrophosphate (PRPP) to anthranilate to yield N-(5'-phosphoribosyl)-anthranilate (PRA). The sequence is that of Anthranilate phosphoribosyltransferase from Psychromonas ingrahamii (strain DSM 17664 / CCUG 51855 / 37).